The following is a 542-amino-acid chain: Chaperonin GroEL 3 (542 aa).

ATP contacts are provided by residues 29–32, 86–90, Gly413, 477–479, and Asp493; these read TLGP, DGTTT, and NAA.

Belongs to the chaperonin (HSP60) family. In terms of assembly, forms a cylinder of 14 subunits composed of two heptameric rings stacked back-to-back. Interacts with the co-chaperonin GroES.

Its subcellular location is the cytoplasm. The catalysed reaction is ATP + H2O + a folded polypeptide = ADP + phosphate + an unfolded polypeptide.. Together with its co-chaperonin GroES, plays an essential role in assisting protein folding. The GroEL-GroES system forms a nano-cage that allows encapsulation of the non-native substrate proteins and provides a physical environment optimized to promote and accelerate protein folding. The chain is Chaperonin GroEL 3 from Frankia alni (strain DSM 45986 / CECT 9034 / ACN14a).